The chain runs to 106 residues: Small ribosomal subunit protein mS33 (106 aa).

Residue Ser2 is modified to N-acetylserine. The disordered stretch occupies residues Glu81–Lys106. Positions Arg84–Pro94 are enriched in basic residues. A compositionally biased stretch (basic and acidic residues) spans Arg95–Lys106.

Belongs to the mitochondrion-specific ribosomal protein mS33 family. In terms of assembly, component of the mitochondrial ribosome small subunit (28S) which comprises a 12S rRNA and about 30 distinct proteins.

Its subcellular location is the mitochondrion. The protein is Small ribosomal subunit protein mS33 (Mrps33) of Mus musculus (Mouse).